The sequence spans 214 residues: Riboflavin kinase (214 aa).

The interval 1–27 (MRPDRPRDPVTGPDEGPESPYPIRMSG) is disordered. Threonine 44 and asparagine 46 together coordinate Mg(2+). Glutamate 101 serves as the catalytic Nucleophile.

It belongs to the flavokinase family. It depends on Zn(2+) as a cofactor. Mg(2+) is required as a cofactor.

The enzyme catalyses riboflavin + ATP = FMN + ADP + H(+). Its pathway is cofactor biosynthesis; FMN biosynthesis; FMN from riboflavin (ATP route): step 1/1. Functionally, catalyzes the phosphorylation of riboflavin (vitamin B2) to form flavin mononucleotide (FMN) coenzyme. The polypeptide is Riboflavin kinase (fmn1) (Aspergillus niger (strain ATCC MYA-4892 / CBS 513.88 / FGSC A1513)).